The following is a 276-amino-acid chain: Putative pyruvate, phosphate dikinase regulatory protein 1 (276 aa).

150–157 (GLPRTSKT) lines the ADP pocket.

It belongs to the pyruvate, phosphate/water dikinase regulatory protein family. PDRP subfamily.

It catalyses the reaction N(tele)-phospho-L-histidyl/L-threonyl-[pyruvate, phosphate dikinase] + ADP = N(tele)-phospho-L-histidyl/O-phospho-L-threonyl-[pyruvate, phosphate dikinase] + AMP + H(+). The enzyme catalyses N(tele)-phospho-L-histidyl/O-phospho-L-threonyl-[pyruvate, phosphate dikinase] + phosphate + H(+) = N(tele)-phospho-L-histidyl/L-threonyl-[pyruvate, phosphate dikinase] + diphosphate. Bifunctional serine/threonine kinase and phosphorylase involved in the regulation of the pyruvate, phosphate dikinase (PPDK) by catalyzing its phosphorylation/dephosphorylation. This chain is Putative pyruvate, phosphate dikinase regulatory protein 1, found in Syntrophomonas wolfei subsp. wolfei (strain DSM 2245B / Goettingen).